We begin with the raw amino-acid sequence, 1454 residues long: Alpha-2-macroglobulin-like protein 1 (1454 aa).

The N-terminal stretch at Met1 to Ala17 is a signal peptide. A disulfide bridge connects residues Cys40 and Cys78. The N-linked (GlcNAc...) asparagine glycan is linked to Asn120. 2 cysteine pairs are disulfide-bonded: Cys241–Cys291 and Cys259–Cys279. N-linked (GlcNAc...) asparagine glycans are attached at residues Asn281 and Asn409. 7 disulfide bridges follow: Cys464-Cys557, Cys589-Cys769, Cys819-Cys847, Cys845-Cys881, Cys919-Cys1307, Cys1075-Cys1123, and Cys1338-Cys1453. A bait region region spans residues Ser695–Asp726. Asn857 carries an N-linked (GlcNAc...) asparagine glycan. A cross-link (isoglutamyl cysteine thioester (Cys-Gln)) is located at residues Cys970–Gln973. Asn1020 carries N-linked (GlcNAc...) asparagine glycosylation.

This sequence belongs to the protease inhibitor I39 (alpha-2-macroglobulin) family. In terms of assembly, monomer. In terms of tissue distribution, in the epidermis, expressed predominantly in the granular layer at the apical edge of keratinocytes (at protein level). Also detected in placenta, testis and thymus but not in epithelia of kidney, lung, small intestine or colon.

The protein resides in the secreted. Is able to inhibit all four classes of proteinases by a unique 'trapping' mechanism. This protein has a peptide stretch, called the 'bait region' which contains specific cleavage sites for different proteinases. When a proteinase cleaves the bait region, a conformational change is induced in the protein which traps the proteinase. The entrapped enzyme remains active against low molecular weight substrates (activity against high molecular weight substrates is greatly reduced). Following cleavage in the bait region a thioester bond is hydrolyzed and mediates the covalent binding of the protein to the proteinase. Displays inhibitory activity against chymotrypsin, papain, thermolysin, subtilisin A and, to a lesser extent, elastase but not trypsin. May play an important role during desquamation by inhibiting extracellular proteases. In Homo sapiens (Human), this protein is Alpha-2-macroglobulin-like protein 1.